The following is a 1096-amino-acid chain: Lysine-specific demethylase 4B (1096 aa).

The JmjN domain occupies 15–57 (IMTFRPTMEEFKDFNKYVAYIESQGAHRAGLAKIIPPKEWKPR). Tyrosine 133 lines the 2-oxoglutarate pocket. The JmjC domain occupies 146–309 (VAQWNIGSLR…YGKVATQCTC (164 aa)). Fe cation contacts are provided by histidine 189 and glutamate 191. The 2-oxoglutarate site is built by asparagine 199 and lysine 207. Zn(2+)-binding residues include cysteine 235 and histidine 241. Lysine 242 lines the 2-oxoglutarate pocket. Histidine 277 serves as a coordination point for Fe cation. Residues cysteine 307 and cysteine 309 each contribute to the Zn(2+) site. The span at 369–382 (LLRRSHRKRSQPKK) shows a compositional bias: basic residues. Disordered stretches follow at residues 369–478 (LLRR…SEEA) and 557–649 (KGPT…VSDP). Residues 391–406 (PGEGTAGAALLEEAGG) show a composition bias toward low complexity. The span at 413–425 (GPEVDPEEEEEEP) shows a compositional bias: acidic residues. The span at 430-443 (HGREAEGAEEDGRG) shows a compositional bias: basic and acidic residues. Residues 444–458 (KLRPTKAKSERKKKS) are compositionally biased toward basic residues. Position 566 is a phosphoserine (serine 566). Lysine 602 is subject to N6-acetyllysine. Residues 632 to 648 (SSDEEASPFSGEEDVSD) are compositionally biased toward acidic residues. The PHD-type 1 zinc finger occupies 731–789 (MCFTSGGENTEPLPANSYIGDDGTSPLIACGKCCLQVHASCYGIRPELVNEGWTCSRCA). The C2HC pre-PHD-type zinc-finger motif lies at 794 to 827 (TAECCLCNLRGGALQMTTDRRWIHVICAIAVPEA). A PHD-type 2 zinc finger spans residues 850–907 (LKCVYCRKRMKKVSGACIQCSYEHCSTSFHVTCAHAAGVLMEPDDWPYVVSITCLKHK). 2 Tudor domains span residues 917–974 (RAVS…CVQL) and 975–1031 (GPPS…EELP). Residues 1037–1073 (RLSLSTGAPQEPAFSGEEAKAAKRPRVGTPLATEDSG) are disordered. A Phosphothreonine modification is found at threonine 1065.

Belongs to the JHDM3 histone demethylase family. It depends on Fe(2+) as a cofactor.

It is found in the nucleus. It carries out the reaction N(6),N(6),N(6)-trimethyl-L-lysyl(9)-[histone H3] + 2 2-oxoglutarate + 2 O2 = N(6)-methyl-L-lysyl(9)-[histone H3] + 2 formaldehyde + 2 succinate + 2 CO2. Histone demethylase that specifically demethylates 'Lys-9' of histone H3, thereby playing a role in histone code. Does not demethylate histone H3 'Lys-4', H3 'Lys-27', H3 'Lys-36' nor H4 'Lys-20'. Only able to demethylate trimethylated H3 'Lys-9', with a weaker activity than KDM4A, KDM4C and KDM4D. Demethylation of Lys residue generates formaldehyde and succinate. Plays a critical role in the development of the central nervous system (CNS). This chain is Lysine-specific demethylase 4B (KDM4B), found in Homo sapiens (Human).